The chain runs to 305 residues: MSKIPVIVIVGPTAVGKTSLSIELAKRLDGEIISGDSMQVYRGLDIGTAKITPEEMGGIKHYLIDVTDPSVPFTAAKFQSETRKAIETIHQAGKLPIIVGGTGLYIQSVFYDYDFGNASEDKAYRAKLEQLDKVILWQMLEQQDPESARQIHENNKRRVIRALEVMHLTGKPFSEYQVHNVLNDTYKPLFLGLDLDRELLYERINQRVNLMFEQGLITEAKKLYEQHLVDVPAVRGIGYKELFPYFERKSSLEEAKELIQKNSRHFAKRQLTWFRNRMDIDWIQAGVSSTESEALNKATTFLTAK.

Glycine 11–threonine 18 serves as a coordination point for ATP. Residue threonine 13 to threonine 18 participates in substrate binding. The interval aspartate 36–glutamine 39 is interaction with substrate tRNA.

It belongs to the IPP transferase family. Monomer. Mg(2+) is required as a cofactor.

The catalysed reaction is adenosine(37) in tRNA + dimethylallyl diphosphate = N(6)-dimethylallyladenosine(37) in tRNA + diphosphate. Functionally, catalyzes the transfer of a dimethylallyl group onto the adenine at position 37 in tRNAs that read codons beginning with uridine, leading to the formation of N6-(dimethylallyl)adenosine (i(6)A). This chain is tRNA dimethylallyltransferase, found in Listeria monocytogenes serotype 4a (strain HCC23).